The chain runs to 454 residues: LETM1 domain-containing protein YLH47, mitochondrial (454 aa).

The N-terminal 45 residues, 1–45, are a transit peptide targeting the mitochondrion; the sequence is MLKYRSLPIKRAIHHPAPGITPISPRIMVSRLRVIPSFNLKFNRW. The Mitochondrial intermembrane portion of the chain corresponds to 46–136; sequence NSSVPESSKK…LKRTTQDIVR (91 aa). The segment at 51 to 73 is disordered; that stretch reads ESSKKELKTTDGNQESASKVSPV. Residues 137–157 traverse the membrane as a helical segment; that stretch reads LVPFAAFLIIPFAELLLPFAL. Over 158 to 454 the chain is Mitochondrial matrix; the sequence is KLFPNLLPST…IGEAAAIKEK (297 aa). Positions 177–371 constitute a Letm1 RBD domain; the sequence is KLENLRNTRK…LCDVLIGIPD (195 aa). Residues 376 to 423 adopt a coiled-coil conformation; that stretch reads EVKVNVVKEDEASAKQKLKQLREQEEIMKEEEQQEENAIVSVKDELSL. Basic and acidic residues-rich tracts occupy residues 420 to 430 and 437 to 454; these read ELSLDDQDKNI and VKPHDTKPIGEAAAIKEK. Residues 420-454 form a disordered region; sequence ELSLDDQDKNIDAAAPDVKPHDTKPIGEAAAIKEK.

In terms of assembly, associates with the mitochondrial ribosomes.

Its subcellular location is the mitochondrion inner membrane. Functionally, involved in mitochondrial potassium homeostasis through the mitochondrial K(+)/H(+) exchange regulation. The polypeptide is LETM1 domain-containing protein YLH47, mitochondrial (YLH47) (Saccharomyces cerevisiae (strain ATCC 204508 / S288c) (Baker's yeast)).